Consider the following 187-residue polypeptide: Large ribosomal subunit protein uL5 (187 aa).

The protein belongs to the universal ribosomal protein uL5 family. Part of the 50S ribosomal subunit; part of the 5S rRNA/L5/L18/L25 subcomplex. Contacts the 5S rRNA and the P site tRNA. Forms a bridge to the 30S subunit in the 70S ribosome.

Functionally, this is one of the proteins that bind and probably mediate the attachment of the 5S RNA into the large ribosomal subunit, where it forms part of the central protuberance. In the 70S ribosome it contacts protein S13 of the 30S subunit (bridge B1b), connecting the 2 subunits; this bridge is implicated in subunit movement. Contacts the P site tRNA; the 5S rRNA and some of its associated proteins might help stabilize positioning of ribosome-bound tRNAs. This chain is Large ribosomal subunit protein uL5, found in Mycobacterium sp. (strain JLS).